A 343-amino-acid chain; its full sequence is Phenylalanine--tRNA ligase alpha subunit (343 aa).

Glutamate 256 contacts Mg(2+).

It belongs to the class-II aminoacyl-tRNA synthetase family. Phe-tRNA synthetase alpha subunit type 1 subfamily. As to quaternary structure, tetramer of two alpha and two beta subunits. Requires Mg(2+) as cofactor.

The protein resides in the cytoplasm. It catalyses the reaction tRNA(Phe) + L-phenylalanine + ATP = L-phenylalanyl-tRNA(Phe) + AMP + diphosphate + H(+). The polypeptide is Phenylalanine--tRNA ligase alpha subunit (Aster yellows witches'-broom phytoplasma (strain AYWB)).